The chain runs to 395 residues: Elongation factor Tu (395 aa).

Residues 10 to 204 (KPHVNIGTIG…AVDNYIPHPV (195 aa)) form the tr-type G domain. A G1 region spans residues 19-26 (GHVDHGKT). 19–26 (GHVDHGKT) is a GTP binding site. Thr26 is a Mg(2+) binding site. The tract at residues 60–64 (GITIS) is G2. Residues 81–84 (DCPG) are G3. GTP contacts are provided by residues 81–85 (DCPGH) and 136–139 (NKVD). The interval 136 to 139 (NKVD) is G4. The interval 174 to 176 (SAL) is G5.

This sequence belongs to the TRAFAC class translation factor GTPase superfamily. Classic translation factor GTPase family. EF-Tu/EF-1A subfamily. In terms of assembly, monomer.

It localises to the cytoplasm. The catalysed reaction is GTP + H2O = GDP + phosphate + H(+). Its function is as follows. GTP hydrolase that promotes the GTP-dependent binding of aminoacyl-tRNA to the A-site of ribosomes during protein biosynthesis. The sequence is that of Elongation factor Tu from Rickettsia akari (strain Hartford).